A 482-amino-acid chain; its full sequence is Aspartyl/glutamyl-tRNA(Asn/Gln) amidotransferase subunit B (482 aa).

This sequence belongs to the GatB/GatE family. GatB subfamily. Heterotrimer of A, B and C subunits.

The enzyme catalyses L-glutamyl-tRNA(Gln) + L-glutamine + ATP + H2O = L-glutaminyl-tRNA(Gln) + L-glutamate + ADP + phosphate + H(+). It carries out the reaction L-aspartyl-tRNA(Asn) + L-glutamine + ATP + H2O = L-asparaginyl-tRNA(Asn) + L-glutamate + ADP + phosphate + 2 H(+). In terms of biological role, allows the formation of correctly charged Asn-tRNA(Asn) or Gln-tRNA(Gln) through the transamidation of misacylated Asp-tRNA(Asn) or Glu-tRNA(Gln) in organisms which lack either or both of asparaginyl-tRNA or glutaminyl-tRNA synthetases. The reaction takes place in the presence of glutamine and ATP through an activated phospho-Asp-tRNA(Asn) or phospho-Glu-tRNA(Gln). The sequence is that of Aspartyl/glutamyl-tRNA(Asn/Gln) amidotransferase subunit B from Ehrlichia canis (strain Jake).